A 345-amino-acid polypeptide reads, in one-letter code: uncharacterized protein (345 aa).

Residues 1–98 (MNDEMKGKSG…ISGKSFIDPE (98 aa)) form a disordered region. Basic and acidic residues-rich tracts occupy residues 18 to 27 (RSDDDSDKRT), 42 to 68 (SRAD…EDSP), and 76 to 86 (PGDETPEKADH).

This sequence belongs to the class IV-like SAM-binding methyltransferase superfamily. RNA methyltransferase TrmH family.

This is an uncharacterized protein from Escherichia coli O157:H7.